The following is a 105-amino-acid chain: UPF0235 protein A1E_05380 (105 aa).

It belongs to the UPF0235 family.

The chain is UPF0235 protein A1E_05380 from Rickettsia canadensis (strain McKiel).